A 23-amino-acid chain; its full sequence is NADH-ubiquinone oxidoreductase 29 kDa subunit (23 aa).

In terms of assembly, complex I is composed of about 45 different subunits.

The protein resides in the mitochondrion inner membrane. It catalyses the reaction a ubiquinone + NADH + 5 H(+)(in) = a ubiquinol + NAD(+) + 4 H(+)(out). Transfer of electrons from NADH to the respiratory chain. The immediate electron acceptor for the enzyme is believed to be ubiquinone. This is NADH-ubiquinone oxidoreductase 29 kDa subunit from Solanum tuberosum (Potato).